Reading from the N-terminus, the 346-residue chain is Phosphate acyltransferase (346 aa).

Belongs to the PlsX family. Homodimer. Probably interacts with PlsY.

It localises to the cytoplasm. It catalyses the reaction a fatty acyl-[ACP] + phosphate = an acyl phosphate + holo-[ACP]. It participates in lipid metabolism; phospholipid metabolism. Its function is as follows. Catalyzes the reversible formation of acyl-phosphate (acyl-PO(4)) from acyl-[acyl-carrier-protein] (acyl-ACP). This enzyme utilizes acyl-ACP as fatty acyl donor, but not acyl-CoA. In Geotalea daltonii (strain DSM 22248 / JCM 15807 / FRC-32) (Geobacter daltonii), this protein is Phosphate acyltransferase.